A 150-amino-acid polypeptide reads, in one-letter code: Arginine repressor (150 aa).

This sequence belongs to the ArgR family.

It is found in the cytoplasm. The protein operates within amino-acid biosynthesis; L-arginine biosynthesis [regulation]. Its function is as follows. Regulates arginine biosynthesis genes. This Clostridium botulinum (strain Okra / Type B1) protein is Arginine repressor.